Consider the following 348-residue polypeptide: Uroporphyrinogen decarboxylase (348 aa).

Substrate is bound by residues arginine 27–arginine 31, phenylalanine 46, aspartate 76, tyrosine 152, serine 207, and histidine 320.

It belongs to the uroporphyrinogen decarboxylase family. Homodimer.

The protein resides in the cytoplasm. The enzyme catalyses uroporphyrinogen III + 4 H(+) = coproporphyrinogen III + 4 CO2. Its pathway is porphyrin-containing compound metabolism; protoporphyrin-IX biosynthesis; coproporphyrinogen-III from 5-aminolevulinate: step 4/4. Its function is as follows. Catalyzes the decarboxylation of four acetate groups of uroporphyrinogen-III to yield coproporphyrinogen-III. The sequence is that of Uroporphyrinogen decarboxylase from Bacillus cytotoxicus (strain DSM 22905 / CIP 110041 / 391-98 / NVH 391-98).